Reading from the N-terminus, the 659-residue chain is QWRF motif-containing protein 2 (659 aa).

Disordered stretches follow at residues 1–125 (MVAA…SVTV), 157–221 (SKKK…LDCG), 291–317 (DTDS…ISKS), 340–359 (RLQD…TSSI), and 371–429 (SDAV…NAYN). The segment covering 42 to 72 (SPSPSHSVSSTTTTTTTTTTTTSSSSSSSSS) has biased composition (low complexity). The span at 90 to 102 (RSTTNSASNSIKT) shows a compositional bias: polar residues. Positions 172–190 (STPERRRSTPVRDQRENSK) are enriched in basic and acidic residues. Composition is skewed to polar residues over residues 206–216 (SESVVPNSLSR) and 291–303 (DTDS…TNGV). 2 stretches are compositionally biased toward low complexity: residues 345–359 (GSPL…TSSI) and 401–418 (ATTT…SRAR). The short motif at 468–471 (QWRF) is the QWRF motif element.

This sequence belongs to the QWRF family.

The sequence is that of QWRF motif-containing protein 2 (QWRF2) from Arabidopsis thaliana (Mouse-ear cress).